The following is a 318-amino-acid chain: Ribosomal lysine N-methyltransferase 5 (318 aa).

Residues Trp95, Gly139–Gly141, Asp161, Trp214, and Met241 each bind S-adenosyl-L-methionine.

The protein belongs to the class I-like SAM-binding methyltransferase superfamily. RKM5 family.

Functionally, S-adenosyl-L-methionine-dependent protein-lysine N-methyltransferase that methylates 60S ribosomal protein L1. This is Ribosomal lysine N-methyltransferase 5 (RKM5) from Zygosaccharomyces rouxii (strain ATCC 2623 / CBS 732 / NBRC 1130 / NCYC 568 / NRRL Y-229).